The primary structure comprises 128 residues: SESSAKKFERQHMDSRGSPSTNPNYCNEMMKSRNMTQGRCKPVNTFVHEPLADVQAVCFQKNVLCKNGQTNCYQSNSNMHITDCRVTSNSDYPNCSYRTSQEEKSIVVACEGNPYVPVHFDASVAASA.

Residues 1–15 are compositionally biased toward basic and acidic residues; it reads SESSAKKFERQHMDS. The tract at residues 1–28 is disordered; sequence SESSAKKFERQHMDSRGSPSTNPNYCNE. Substrate is bound by residues K7 and R10. Residue H12 is the Proton acceptor of the active site. 4 disulfide bridges follow: C26/C84, C40/C95, C58/C110, and C65/C72. N34 carries an N-linked (GlcNAc...) asparagine glycan. Residues 41-45, K66, and R85 contribute to the substrate site; that span reads KPVNT. Catalysis depends on H119, which acts as the Proton donor.

Belongs to the pancreatic ribonuclease family. As to quaternary structure, monomer. Interacts with and forms tight 1:1 complexes with RNH1. Dimerization of two such complexes may occur. Interaction with RNH1 inhibits this protein. Pancreas.

The protein localises to the secreted. It carries out the reaction an [RNA] containing cytidine + H2O = an [RNA]-3'-cytidine-3'-phosphate + a 5'-hydroxy-ribonucleotide-3'-[RNA].. It catalyses the reaction an [RNA] containing uridine + H2O = an [RNA]-3'-uridine-3'-phosphate + a 5'-hydroxy-ribonucleotide-3'-[RNA].. Endonuclease that catalyzes the cleavage of RNA on the 3' side of pyrimidine nucleotides. Acts on single-stranded and double-stranded RNA. This chain is Ribonuclease pancreatic (RNASE1), found in Myocastor coypus (Coypu).